Here is a 356-residue protein sequence, read N- to C-terminus: uncharacterized protein (356 aa).

Helical transmembrane passes span 258–275 (SALQ…VFYY), 290–312 (PHWL…TEAL), and 325–347 (LVLL…TLFS).

It is found in the cell membrane. This is an uncharacterized protein from Archaeoglobus fulgidus (strain ATCC 49558 / DSM 4304 / JCM 9628 / NBRC 100126 / VC-16).